The chain runs to 432 residues: Mannan endo-1,4-beta-mannosidase 1 (432 aa).

Positions 1 to 28 (MRLLGAHRAALLVLACVVVVVIHGLGEA) are cleaved as a signal peptide. Trp-93 and Asn-209 together coordinate substrate. The Proton donor role is filled by Glu-210. Residue Tyr-289 participates in substrate binding. Catalysis depends on Glu-329, which acts as the Nucleophile. Trp-371 is a binding site for substrate.

The protein belongs to the glycosyl hydrolase 5 (cellulase A) family. As to expression, ubiquitous.

The protein resides in the secreted. The enzyme catalyses Random hydrolysis of (1-&gt;4)-beta-D-mannosidic linkages in mannans, galactomannans and glucomannans.. The protein is Mannan endo-1,4-beta-mannosidase 1 (MAN1) of Oryza sativa subsp. japonica (Rice).